Reading from the N-terminus, the 316-residue chain is DNA-directed RNA polymerase subunit alpha (316 aa).

An alpha N-terminal domain (alpha-NTD) region spans residues 1–230; the sequence is MIEFEKPNIH…EHLAMFVDLT (230 aa). The tract at residues 247–316 is alpha C-terminal domain (alpha-CTD); that stretch reads KEKMLEMTIE…DLGLSLRKED (70 aa).

The protein belongs to the RNA polymerase alpha chain family. In terms of assembly, homodimer. The RNAP catalytic core consists of 2 alpha, 1 beta, 1 beta' and 1 omega subunit. When a sigma factor is associated with the core the holoenzyme is formed, which can initiate transcription.

The catalysed reaction is RNA(n) + a ribonucleoside 5'-triphosphate = RNA(n+1) + diphosphate. Its function is as follows. DNA-dependent RNA polymerase catalyzes the transcription of DNA into RNA using the four ribonucleoside triphosphates as substrates. This is DNA-directed RNA polymerase subunit alpha from Levilactobacillus brevis (strain ATCC 367 / BCRC 12310 / CIP 105137 / JCM 1170 / LMG 11437 / NCIMB 947 / NCTC 947) (Lactobacillus brevis).